We begin with the raw amino-acid sequence, 177 residues long: 3-hydroxydecanoyl-[acyl-carrier-protein] dehydratase (177 aa).

His-76 is an active-site residue.

It belongs to the thioester dehydratase family. FabA subfamily. In terms of assembly, homodimer.

It localises to the cytoplasm. The catalysed reaction is a (3R)-hydroxyacyl-[ACP] = a (2E)-enoyl-[ACP] + H2O. It carries out the reaction (3R)-hydroxydecanoyl-[ACP] = (2E)-decenoyl-[ACP] + H2O. The enzyme catalyses (2E)-decenoyl-[ACP] = (3Z)-decenoyl-[ACP]. It participates in lipid metabolism; fatty acid biosynthesis. Functionally, necessary for the introduction of cis unsaturation into fatty acids. Catalyzes the dehydration of (3R)-3-hydroxydecanoyl-ACP to E-(2)-decenoyl-ACP and then its isomerization to Z-(3)-decenoyl-ACP. Can catalyze the dehydratase reaction for beta-hydroxyacyl-ACPs with saturated chain lengths up to 16:0, being most active on intermediate chain length. In Actinobacillus succinogenes (strain ATCC 55618 / DSM 22257 / CCUG 43843 / 130Z), this protein is 3-hydroxydecanoyl-[acyl-carrier-protein] dehydratase.